The sequence spans 74 residues: MSGTGVLLLTLLLLVAMAASDMLSSLIQAHERDSEESCKSYGGGPCPSGEDCCCPPGRSTGTCKRTCNNGSVCA.

The N-terminal stretch at 1-19 is a signal peptide; it reads MSGTGVLLLTLLLLVAMAA.

Post-translationally, may contain 4 disulfide bonds. As to expression, expressed by the venom duct.

Its subcellular location is the secreted. Its function is as follows. Probable neurotoxin. The polypeptide is Conotoxin Cal27 (Californiconus californicus (California cone)).